We begin with the raw amino-acid sequence, 792 residues long: Ribosome biogenesis protein BOP1 homolog (792 aa).

The segment covering 1-11 has biased composition (basic residues); sequence MTKKRTVKRKV. The interval 1 to 167 is disordered; sequence MTKKRTVKRK…ESDTSDEEDI (167 aa). 4 stretches are compositionally biased toward acidic residues: residues 44 to 53, 60 to 72, 82 to 117, and 157 to 166; these read EDTTDDEGID, SSED…DEEG, EAEE…ESDA, and EESDTSDEED. WD repeat units lie at residues 453-494, 496-534, 578-620, 623-661, 664-703, 707-746, and 762-792; these read GHTD…RTIE, NDVV…KLLI, THFK…SQIP, KSKG…LIKK, TNSK…KPYQ, LHRN…DLLQ, and RDEF…RLYT.

This sequence belongs to the WD repeat BOP1/ERB1 family.

The protein localises to the nucleus. The protein resides in the nucleolus. Its subcellular location is the nucleoplasm. Functionally, required for maturation of ribosomal RNAs and formation of the large ribosomal subunit. The chain is Ribosome biogenesis protein BOP1 homolog from Drosophila mojavensis (Fruit fly).